Here is a 179-residue protein sequence, read N- to C-terminus: Large ribosomal subunit protein uL6 (179 aa).

The protein belongs to the universal ribosomal protein uL6 family. As to quaternary structure, part of the 50S ribosomal subunit.

In terms of biological role, this protein binds to the 23S rRNA, and is important in its secondary structure. It is located near the subunit interface in the base of the L7/L12 stalk, and near the tRNA binding site of the peptidyltransferase center. In Mycoplasmopsis pulmonis (strain UAB CTIP) (Mycoplasma pulmonis), this protein is Large ribosomal subunit protein uL6.